Here is a 333-residue protein sequence, read N- to C-terminus: Beta-ketoacyl-[acyl-carrier-protein] synthase III (333 aa).

Active-site residues include Cys112 and His255. The ACP-binding stretch occupies residues Gln256–Arg260. Asn285 is a catalytic residue.

This sequence belongs to the thiolase-like superfamily. FabH family. In terms of assembly, homodimer.

Its subcellular location is the cytoplasm. It carries out the reaction malonyl-[ACP] + acetyl-CoA + H(+) = 3-oxobutanoyl-[ACP] + CO2 + CoA. It functions in the pathway lipid metabolism; fatty acid biosynthesis. Functionally, catalyzes the condensation reaction of fatty acid synthesis by the addition to an acyl acceptor of two carbons from malonyl-ACP. Catalyzes the first condensation reaction which initiates fatty acid synthesis and may therefore play a role in governing the total rate of fatty acid production. Possesses both acetoacetyl-ACP synthase and acetyl transacylase activities. Its substrate specificity determines the biosynthesis of branched-chain and/or straight-chain of fatty acids. The sequence is that of Beta-ketoacyl-[acyl-carrier-protein] synthase III from Synechococcus sp. (strain RCC307).